The sequence spans 121 residues: MAKKKKLSFTNGIAYIHATKNNTIITLADEQGSVLSWASSGSIGYKGTKKKTPYSAGIAAEAAAKAVIDMGLKSVEVHVNGTGASRDTAIRSLQAAGLEVTKIKDVTPIPHNGCRPPKKPR.

This sequence belongs to the universal ribosomal protein uS11 family. In terms of assembly, part of the 30S ribosomal subunit. Interacts with proteins S7 and S18. Binds to IF-3.

Its function is as follows. Located on the platform of the 30S subunit, it bridges several disparate RNA helices of the 16S rRNA. Forms part of the Shine-Dalgarno cleft in the 70S ribosome. The polypeptide is Small ribosomal subunit protein uS11 (Ureaplasma parvum serovar 3 (strain ATCC 27815 / 27 / NCTC 11736)).